The chain runs to 604 residues: Rhotekin-2 (604 aa).

Residues 1 to 74 (MEGQLLRGLA…LQKSKEEIAN (74 aa)) form the REM-1 domain. Positions 53 to 79 (VCSARIQAYTAELQKSKEEIANQTGAR) form a coiled coil. Residues 281-387 (ADAFAGFLNE…WMGAFRQHFF (107 aa)) form the PH domain. Residues 481 to 590 (LSPIGEPAPD…PVPVPRQKSI (110 aa)) form a disordered region. The span at 514 to 527 (GRANQSKDSATQAG) shows a compositional bias: polar residues. Residues 529-543 (SGASSSPSDPRLSPP) show a composition bias toward low complexity.

May play an important role in lymphopoiesis. This is Rhotekin-2 (Rtkn2) from Mus musculus (Mouse).